Reading from the N-terminus, the 233-residue chain is Small ribosomal subunit protein uS2 (233 aa).

This sequence belongs to the universal ribosomal protein uS2 family.

This is Small ribosomal subunit protein uS2 from Bacillus cereus (strain G9842).